The primary structure comprises 651 residues: Cysteine-rich receptor-like protein kinase 42 (651 aa).

The first 28 residues, 1–28, serve as a signal peptide directing secretion; sequence MRCLTKTRSFHYVIIFYSFFFLPFLSSS. Over 29 to 251 the chain is Extracellular; that stretch reads SDDQRTTVSG…HHKFHVLFNK (223 aa). Gnk2-homologous domains lie at 35-135 and 137-236; these read TVSG…TYEF and DESV…DHKF. N79 and N151 each carry an N-linked (GlcNAc...) asparagine glycan. A helical transmembrane segment spans residues 252 to 272; it reads GVIVAIVLTTSAFVMLILLAT. At 273-651 the chain is on the cytoplasmic side; it reads YVIMTKVSKT…SSESSTTRTI (379 aa). Residues 315-604 enclose the Protein kinase domain; the sequence is FSHKKMLGQG…IPSPTSPPFL (290 aa). Residues 321 to 329 and K343 each bind ATP; that span reads LGQGGNGTV. A Phosphotyrosine modification is found at Y388. The active-site Proton acceptor is D440. A phosphoserine mark is found at S444 and S473. A phosphothreonine mark is found at T474 and T479. Y487 carries the post-translational modification Phosphotyrosine.

Belongs to the protein kinase superfamily. Ser/Thr protein kinase family. CRK subfamily.

The protein localises to the membrane. The enzyme catalyses L-seryl-[protein] + ATP = O-phospho-L-seryl-[protein] + ADP + H(+). It carries out the reaction L-threonyl-[protein] + ATP = O-phospho-L-threonyl-[protein] + ADP + H(+). The polypeptide is Cysteine-rich receptor-like protein kinase 42 (CRK42) (Arabidopsis thaliana (Mouse-ear cress)).